Here is a 351-residue protein sequence, read N- to C-terminus: S-adenosylmethionine:tRNA ribosyltransferase-isomerase (351 aa).

The protein belongs to the QueA family. As to quaternary structure, monomer.

The protein localises to the cytoplasm. It carries out the reaction 7-aminomethyl-7-carbaguanosine(34) in tRNA + S-adenosyl-L-methionine = epoxyqueuosine(34) in tRNA + adenine + L-methionine + 2 H(+). Its pathway is tRNA modification; tRNA-queuosine biosynthesis. Its function is as follows. Transfers and isomerizes the ribose moiety from AdoMet to the 7-aminomethyl group of 7-deazaguanine (preQ1-tRNA) to give epoxyqueuosine (oQ-tRNA). In Phocaeicola vulgatus (strain ATCC 8482 / DSM 1447 / JCM 5826 / CCUG 4940 / NBRC 14291 / NCTC 11154) (Bacteroides vulgatus), this protein is S-adenosylmethionine:tRNA ribosyltransferase-isomerase.